The primary structure comprises 324 residues: Beta-ketoacyl-[acyl-carrier-protein] synthase III (324 aa).

Active-site residues include C113 and H251. The segment at Q252–R256 is ACP-binding. N281 is an active-site residue.

The protein belongs to the thiolase-like superfamily. FabH family. In terms of assembly, homodimer.

The protein localises to the cytoplasm. It carries out the reaction malonyl-[ACP] + acetyl-CoA + H(+) = 3-oxobutanoyl-[ACP] + CO2 + CoA. It participates in lipid metabolism; fatty acid biosynthesis. Functionally, catalyzes the condensation reaction of fatty acid synthesis by the addition to an acyl acceptor of two carbons from malonyl-ACP. Catalyzes the first condensation reaction which initiates fatty acid synthesis and may therefore play a role in governing the total rate of fatty acid production. Possesses both acetoacetyl-ACP synthase and acetyl transacylase activities. Its substrate specificity determines the biosynthesis of branched-chain and/or straight-chain of fatty acids. This Bartonella bacilliformis (strain ATCC 35685 / KC583 / Herrer 020/F12,63) protein is Beta-ketoacyl-[acyl-carrier-protein] synthase III.